A 376-amino-acid chain; its full sequence is Phosphoserine aminotransferase (376 aa).

Arginine 46 lines the L-glutamate pocket. Residues 80–81, phenylalanine 104, threonine 150, aspartate 172, and glutamine 195 each bind pyridoxal 5'-phosphate; that span reads AT. The residue at position 196 (lysine 196) is an N6-(pyridoxal phosphate)lysine. 247-248 is a binding site for pyridoxal 5'-phosphate; it reads NT.

This sequence belongs to the class-V pyridoxal-phosphate-dependent aminotransferase family. SerC subfamily. In terms of assembly, homodimer. Pyridoxal 5'-phosphate is required as a cofactor.

The protein resides in the cytoplasm. It catalyses the reaction O-phospho-L-serine + 2-oxoglutarate = 3-phosphooxypyruvate + L-glutamate. It carries out the reaction 4-(phosphooxy)-L-threonine + 2-oxoglutarate = (R)-3-hydroxy-2-oxo-4-phosphooxybutanoate + L-glutamate. It participates in amino-acid biosynthesis; L-serine biosynthesis; L-serine from 3-phospho-D-glycerate: step 2/3. The protein operates within cofactor biosynthesis; pyridoxine 5'-phosphate biosynthesis; pyridoxine 5'-phosphate from D-erythrose 4-phosphate: step 3/5. Functionally, catalyzes the reversible conversion of 3-phosphohydroxypyruvate to phosphoserine and of 3-hydroxy-2-oxo-4-phosphonooxybutanoate to phosphohydroxythreonine. The sequence is that of Phosphoserine aminotransferase from Corynebacterium glutamicum (strain R).